Reading from the N-terminus, the 289-residue chain is ATP synthase mitochondrial F1 complex assembly factor 2 (289 aa).

A mitochondrion-targeting transit peptide spans 1–40 (MWRSCLRLRDGGRRLLNRPAGGPSASMSPGPTIPSPARAY). The tract at residues 13–40 (RRLLNRPAGGPSASMSPGPTIPSPARAY) is disordered. Lysine 133 is modified (N6-succinyllysine).

This sequence belongs to the ATP12 family. In terms of assembly, interacts with ATP5F1B; involved in the assembly of the F1 component of the mitochondrial ATP synthase (ATPase). Interacts with FMC1. Widely expressed.

Its subcellular location is the mitochondrion inner membrane. In terms of biological role, plays a role in the assembly of the F1 component of the mitochondrial ATP synthase (ATPase). The sequence is that of ATP synthase mitochondrial F1 complex assembly factor 2 from Homo sapiens (Human).